A 543-amino-acid polypeptide reads, in one-letter code: CTP synthase (543 aa).

Residues 1–265 (MARYIFITGG…DDEVLAAFGI (265 aa)) form an amidoligase domain region. Ser-13 contributes to the CTP binding site. Ser-13 lines the UTP pocket. Position 14 to 19 (14 to 19 (SLGKGL)) interacts with ATP. Tyr-54 serves as a coordination point for L-glutamine. Residue Asp-71 coordinates ATP. The Mg(2+) site is built by Asp-71 and Glu-139. CTP contacts are provided by residues 146–148 (DIE), 186–191 (KTKPTQ), and Lys-222. UTP contacts are provided by residues 186-191 (KTKPTQ) and Lys-222. Residue 238–240 (RDV) participates in ATP binding. Residues 291–542 (TIAIVGKYTG…IQAAVVQSRL (252 aa)) form the Glutamine amidotransferase type-1 domain. Residue Gly-353 participates in L-glutamine binding. Cys-380 serves as the catalytic Nucleophile; for glutamine hydrolysis. L-glutamine is bound by residues 381–384 (FGMQ), Glu-404, and Arg-470. Active-site residues include His-515 and Glu-517.

It belongs to the CTP synthase family. As to quaternary structure, homotetramer.

It carries out the reaction UTP + L-glutamine + ATP + H2O = CTP + L-glutamate + ADP + phosphate + 2 H(+). The catalysed reaction is L-glutamine + H2O = L-glutamate + NH4(+). It catalyses the reaction UTP + NH4(+) + ATP = CTP + ADP + phosphate + 2 H(+). It participates in pyrimidine metabolism; CTP biosynthesis via de novo pathway; CTP from UDP: step 2/2. Allosterically activated by GTP, when glutamine is the substrate; GTP has no effect on the reaction when ammonia is the substrate. The allosteric effector GTP functions by stabilizing the protein conformation that binds the tetrahedral intermediate(s) formed during glutamine hydrolysis. Inhibited by the product CTP, via allosteric rather than competitive inhibition. In terms of biological role, catalyzes the ATP-dependent amination of UTP to CTP with either L-glutamine or ammonia as the source of nitrogen. Regulates intracellular CTP levels through interactions with the four ribonucleotide triphosphates. The polypeptide is CTP synthase (Bradyrhizobium sp. (strain BTAi1 / ATCC BAA-1182)).